We begin with the raw amino-acid sequence, 507 residues long: FAD-linked oxidoreductase OXR1 (507 aa).

The first 21 residues, 1–21 (MTIKFASLILAGLGLGSGALG), serve as a signal peptide directing secretion. N-linked (GlcNAc...) asparagine glycosylation is found at Asn34 and Asn65. Residues 73-245 (YAPPTFKVSV…VSATYKLKPL (173 aa)) enclose the FAD-binding PCMH-type domain. N-linked (GlcNAc...) asparagine glycans are attached at residues Asn263 and Asn288.

The protein belongs to the oxygen-dependent FAD-linked oxidoreductase family. FAD serves as cofactor.

The catalysed reaction is dihydropyriculol + A = pyriculol + AH2. The enzyme catalyses dihydropyriculariol + A = pyriculariol + AH2. It functions in the pathway polyketide biosynthesis. Functionally, FAD-linked oxidoreductase; part of the gene cluster that mediates the biosynthesis of pyriculol and pyriculariol, two heptaketides that induce lesion formation upon application on rice leaves but are dispensable for pathogenicity. The highly reducing polyketide synthase synthesizes the heptaketide backbone of pyriculol and pyriculariol. Pyriculol and pyriculariol contain several hydroxyl moieties and double bonds, so it can be assumed that several reduction steps occur during biosynthesis. These reactions could be executed by PKS19 itself or partly by the tailoring enzymes OXR1, OXR2, RED1, RED2 or RED3, identified within the cluster. The FAD-linked oxidoreductase OXR1 is the only tailoring enzyme for which the function has been determined yet, and is involved in the oxidation of dihydropyriculol and dihydropyriculariol into pyriculol and pyriculariol, respectively. The chain is FAD-linked oxidoreductase OXR1 from Pyricularia oryzae (strain 70-15 / ATCC MYA-4617 / FGSC 8958) (Rice blast fungus).